Reading from the N-terminus, the 284-residue chain is Bifunctional protein FolD 1 (284 aa).

Residues Gly164–Ser166, Ser189, and Ile230 each bind NADP(+).

Belongs to the tetrahydrofolate dehydrogenase/cyclohydrolase family. In terms of assembly, homodimer.

It catalyses the reaction (6R)-5,10-methylene-5,6,7,8-tetrahydrofolate + NADP(+) = (6R)-5,10-methenyltetrahydrofolate + NADPH. It carries out the reaction (6R)-5,10-methenyltetrahydrofolate + H2O = (6R)-10-formyltetrahydrofolate + H(+). Its pathway is one-carbon metabolism; tetrahydrofolate interconversion. Catalyzes the oxidation of 5,10-methylenetetrahydrofolate to 5,10-methenyltetrahydrofolate and then the hydrolysis of 5,10-methenyltetrahydrofolate to 10-formyltetrahydrofolate. This chain is Bifunctional protein FolD 1, found in Rubrobacter xylanophilus (strain DSM 9941 / JCM 11954 / NBRC 16129 / PRD-1).